Consider the following 377-residue polypeptide: Bifunctional enzyme IspD/IspF (377 aa).

Positions 1 to 221 (MTTAAIIVAA…ERILRQDMDV (221 aa)) are 2-C-methyl-D-erythritol 4-phosphate cytidylyltransferase. Residues 222–377 (RLGNGYDVHR…ALATACLVKP (156 aa)) form a 2-C-methyl-D-erythritol 2,4-cyclodiphosphate synthase region. A divalent metal cation is bound by residues D228 and H230. Residues 228-230 (DVH) and 254-255 (HS) each bind 4-CDP-2-C-methyl-D-erythritol 2-phosphate. H262 provides a ligand contact to a divalent metal cation. Residues 276–278 (DIG), 352–355 (TTSE), F359, and R362 each bind 4-CDP-2-C-methyl-D-erythritol 2-phosphate.

In the N-terminal section; belongs to the IspD/TarI cytidylyltransferase family. IspD subfamily. The protein in the C-terminal section; belongs to the IspF family. It depends on a divalent metal cation as a cofactor.

It catalyses the reaction 2-C-methyl-D-erythritol 4-phosphate + CTP + H(+) = 4-CDP-2-C-methyl-D-erythritol + diphosphate. The catalysed reaction is 4-CDP-2-C-methyl-D-erythritol 2-phosphate = 2-C-methyl-D-erythritol 2,4-cyclic diphosphate + CMP. The protein operates within isoprenoid biosynthesis; isopentenyl diphosphate biosynthesis via DXP pathway; isopentenyl diphosphate from 1-deoxy-D-xylulose 5-phosphate: step 2/6. It functions in the pathway isoprenoid biosynthesis; isopentenyl diphosphate biosynthesis via DXP pathway; isopentenyl diphosphate from 1-deoxy-D-xylulose 5-phosphate: step 4/6. Bifunctional enzyme that catalyzes the formation of 4-diphosphocytidyl-2-C-methyl-D-erythritol from CTP and 2-C-methyl-D-erythritol 4-phosphate (MEP) (IspD), and catalyzes the conversion of 4-diphosphocytidyl-2-C-methyl-D-erythritol 2-phosphate (CDP-ME2P) to 2-C-methyl-D-erythritol 2,4-cyclodiphosphate (ME-CPP) with a corresponding release of cytidine 5-monophosphate (CMP) (IspF). The chain is Bifunctional enzyme IspD/IspF from Ruegeria pomeroyi (strain ATCC 700808 / DSM 15171 / DSS-3) (Silicibacter pomeroyi).